We begin with the raw amino-acid sequence, 201 residues long: Ribosome maturation factor RimP (201 aa).

It belongs to the RimP family.

The protein localises to the cytoplasm. In terms of biological role, required for maturation of 30S ribosomal subunits. The protein is Ribosome maturation factor RimP of Rhizobium leguminosarum bv. trifolii (strain WSM2304).